The primary structure comprises 90 residues: MKTAIFTVVLALAVFAVLSFGWEANEKALSEEFTELIHEKEAASETEARECRYFWGECHDHMPCCDWLVCRYKWPIAYNICVWNRTFPEK.

The N-terminal stretch at 1–19 is a signal peptide; that stretch reads MKTAIFTVVLALAVFAVLS. Positions 20-50 are excised as a propeptide; sequence FGWEANEKALSEEFTELIHEKEAASETEARE. Intrachain disulfides connect cysteine 51/cysteine 65, cysteine 58/cysteine 70, and cysteine 64/cysteine 81.

Belongs to the neurotoxin 10 (Hwtx-1) family. 13 (Hntx-13) subfamily. Expressed by the venom gland.

It localises to the secreted. Ion channel inhibitor. This is U7-theraphotoxin-Hhn1g from Cyriopagopus hainanus (Chinese bird spider).